The following is a 1465-amino-acid chain: MSDLFAKLMDQIEMPLDMRRSSAFSSADIIEVKVHSVSRLWEFHFAFAAVLPIATYRELHDRLIRTFEAADIKVTFDIQAAQVDYSDDLLQAYYQEAFEHAPCNSASFKSSFSKLKVTYEDDKLIIAAPGFVNNDHFRNNHLPNLVKQFEAFGFGTLTIDMVSDQEMTEHLTKDFVSSRQALVKKAVQDNLEAQKSLEAMMPPVEEATPAPKFDYKERAAKRQAGFEKATITPMIEIETEENRIVFEGMVFDVERKTTRTGRHIINFKMTDYTSSFALQKWAKDDEELRKFDMIAKGAWLRVQGNIETNPFTKSLTMNVQQVKEIVHHERKDLMPEGQKRVELHAHTNMSTMDALPTVESLIDTAAKWGHKAVAITDHANVQSFPHGYHRARKAGIKAIFGLEANIVEDKVPISYDPVDMDLHEATYVVFDVETTGLSAMNNDLIQIAASKMFKGNIVEQFDEFIDPGHPLSAFTTELTGITDKHLQGAKPLVTVLKAFQDFCKDSILVAHNASFDVGFMNANYERHDLPKITQPVIDTLEFARNLYPEYKRHGLGPLTKRFQVSLDHHHMANYDAEATGRLLFIFLKDAREKHGIKNLLQLNTDLVAEDSYKKARIKHATIYVQNQVGLKNMFKLVSLSNIKYFEGVPRIPRTVLDAHREGLLLGTACSDGEVFDAVLTKGIDAAVDLAKYYDFIEIMPPAIYQPLVVRELIKDQAGIEQVIRDLIEVGKRANKLVLATGNVHYLEPEEEIYREIIVRSLGQGAMINRTIGRGEGAQPAPLPKAHFRTTNEMLDEFAFLGKDLAYQVVVENTQDFADRIEEVEVVKGDLYTPYIDKAEETVAELTYQKAFEIYGNPLPDIIDLRIEKELTSILGNGFAVIYLASQMLVNRSNERGYLVGSRGSVGSSFVATMIGITEVNPMPPHYVCPSCQHSEFITDGSVGSGYDLPNKPCPKCGTPYQKDGQDIPFETFLGFDGDKVPDIDLNFSGDDQPSAHLDVRDIFGAEYAFRAGTVGTVAEKTAYGFVKGYERDYGKFYRDAEVDRLAAGAAGVKRTTGQHPGGIVVIPNYMDVYDFTPVQYPADDVTASWQTTHFNFHDIDENVLKLDILGHDDPTMIRKLQDLSGIDPITIPADDPGVMALFSGTEVLGVTPEQIGTPTGMLGIPEFGTNFVRGMVNETHPTTFAELLQLSGLSHGTDVWLGNAQDLIKEGIATLKTVIGCRDDIMVYLMHAGLEPKMAFTIMERVRKGLWLKISEEERNGYIDAMRENNVPDWYIESCGKIKYMFPKAHAAAYVLMALRVAYFKVHHPIMYYCAYFSIRAKAFELKTMSGGLDAVKARMEDITIKRKNNEATNVENDLFTTLEIVNEMLERGFKFGKLDLYKSDAIEFQIKGDTLIPPFIALEGLGENVAKQIVKARQEGEFLSKMELRKRGGASSTLVEKMDEMGILGNMPEDNQLSLFDDFF.

The 157-residue stretch at 427-583 (YVVFDVETTG…YDAEATGRLL (157 aa)) folds into the Exonuclease domain.

It belongs to the DNA polymerase type-C family. PolC subfamily.

It is found in the cytoplasm. It carries out the reaction DNA(n) + a 2'-deoxyribonucleoside 5'-triphosphate = DNA(n+1) + diphosphate. Functionally, required for replicative DNA synthesis. This DNA polymerase also exhibits 3' to 5' exonuclease activity. This chain is DNA polymerase III PolC-type, found in Streptococcus pyogenes serotype M4 (strain MGAS10750).